The sequence spans 441 residues: Zinc finger and BTB domain-containing protein 8A (441 aa).

The 69-residue stretch at 24 to 92 (CDCSILVEGK…VYSGKLSLTG (69 aa)) folds into the BTB domain. 2 stretches are compositionally biased toward polar residues: residues 146–170 (ERSS…SPDQ) and 178–197 (KSWS…QQPL). Residues 146–252 (ERSSFYSSGW…SEEQAQMNAE (107 aa)) are disordered. Residues Ser161 and Ser167 each carry the phosphoserine modification. Residues Lys178, Lys182, and Lys199 each participate in a glycyl lysine isopeptide (Lys-Gly) (interchain with G-Cter in SUMO2) cross-link. Basic and acidic residues predominate over residues 198–208 (TKHEQRKDSIK). Residues 234-248 (SDSSSHASQSEEQAQ) show a composition bias toward low complexity. 2 consecutive C2H2-type zinc fingers follow at residues 282–304 (FKCP…LRCH) and 310–333 (YPCQ…RTIH). Lys437 is covalently cross-linked (Glycyl lysine isopeptide (Lys-Gly) (interchain with G-Cter in SUMO2)).

It is found in the nucleus. Its function is as follows. May be involved in transcriptional regulation. The protein is Zinc finger and BTB domain-containing protein 8A (ZBTB8A) of Bos taurus (Bovine).